We begin with the raw amino-acid sequence, 180 residues long: Large ribosomal subunit protein uL6 (180 aa).

This sequence belongs to the universal ribosomal protein uL6 family. Part of the 50S ribosomal subunit.

This protein binds to the 23S rRNA, and is important in its secondary structure. It is located near the subunit interface in the base of the L7/L12 stalk, and near the tRNA binding site of the peptidyltransferase center. This is Large ribosomal subunit protein uL6 from Clostridium botulinum (strain ATCC 19397 / Type A).